Reading from the N-terminus, the 39-residue chain is Small basic protein 1 (39 aa).

Gln1 carries the post-translational modification Pyrrolidone carboxylic acid. Disulfide bonds link Cys6–Cys32, Cys10–Cys26, and Cys14–Cys31.

Its subcellular location is the secreted. The polypeptide is Small basic protein 1 (Anas platyrhynchos (Mallard)).